Consider the following 309-residue polypeptide: ATP synthase gamma chain (309 aa).

The protein belongs to the ATPase gamma chain family. As to quaternary structure, F-type ATPases have 2 components, CF(1) - the catalytic core - and CF(0) - the membrane proton channel. CF(1) has five subunits: alpha(3), beta(3), gamma(1), delta(1), epsilon(1). CF(0) has three main subunits: a, b and c.

The protein localises to the cell membrane. Functionally, produces ATP from ADP in the presence of a proton gradient across the membrane. The gamma chain is believed to be important in regulating ATPase activity and the flow of protons through the CF(0) complex. In Salinispora arenicola (strain CNS-205), this protein is ATP synthase gamma chain.